The primary structure comprises 306 residues: Arginase (306 aa).

Mn(2+)-binding residues include histidine 96, aspartate 123, histidine 125, and aspartate 127. Substrate contacts are provided by residues histidine 125 to histidine 129, serine 136 to asparagine 138, and aspartate 178. Positions 226 and 228 each coordinate Mn(2+). Positions 240 and 271 each coordinate substrate.

This sequence belongs to the arginase family. Mn(2+) serves as cofactor.

The catalysed reaction is L-arginine + H2O = urea + L-ornithine. It functions in the pathway nitrogen metabolism; urea cycle; L-ornithine and urea from L-arginine: step 1/1. This is Arginase (arcB) from Brucella abortus biovar 1 (strain 9-941).